The primary structure comprises 527 residues: Berberine bridge enzyme-like 8 (527 aa).

Residues 1–20 (MKYALILVLFFVVFIWQSSS) form the signal peptide. The cysteines at positions 31 and 93 are disulfide-linked. N-linked (GlcNAc...) asparagine glycosylation is found at Asn51 and Asn68. In terms of domain architecture, FAD-binding PCMH-type spans 71-247 (STPKPFLIIA…LAYKINLVEV (177 aa)). The 6-(S-cysteinyl)-8alpha-(pros-histidyl)-FAD (His-Cys) cross-link spans 108–172 (HDYDGLSYVT…KTLAYPAGIC (65 aa)). Residues Asn250, Asn263, and Asn292 are each glycosylated (N-linked (GlcNAc...) asparagine).

Belongs to the oxygen-dependent FAD-linked oxidoreductase family. FAD is required as a cofactor. In terms of processing, the FAD cofactor is bound via a bicovalent 6-S-cysteinyl, 8alpha-N1-histidyl FAD linkage.

Its subcellular location is the secreted. It localises to the cell wall. This chain is Berberine bridge enzyme-like 8, found in Arabidopsis thaliana (Mouse-ear cress).